A 355-amino-acid polypeptide reads, in one-letter code: Uroporphyrinogen decarboxylase (355 aa).

Residues 27 to 31 (RQAGR), D77, Y154, T209, and H328 contribute to the substrate site.

The protein belongs to the uroporphyrinogen decarboxylase family. As to quaternary structure, homodimer.

It localises to the cytoplasm. The catalysed reaction is uroporphyrinogen III + 4 H(+) = coproporphyrinogen III + 4 CO2. The protein operates within porphyrin-containing compound metabolism; protoporphyrin-IX biosynthesis; coproporphyrinogen-III from 5-aminolevulinate: step 4/4. Its function is as follows. Catalyzes the decarboxylation of four acetate groups of uroporphyrinogen-III to yield coproporphyrinogen-III. The protein is Uroporphyrinogen decarboxylase of Photobacterium profundum (strain SS9).